Here is a 735-residue protein sequence, read N- to C-terminus: NAD(P)H-quinone oxidoreductase subunit 5, chloroplastic (735 aa).

The next 16 helical transmembrane spans lie at 9 to 29 (WIIPFVPLPIPILIGMGLLLF), 40 to 60 (WAFPNILLLSIVMIFSLDLSI), 89 to 109 (IDSLTSIMSILITTVGIFVLI), 125 to 145 (FAYMSLFNTSMLGLVTSCNLI), 147 to 167 (IYIFWELVGMCSYLLIGFWFT), 184 to 204 (IGDFGLLLGILGFYWITGSFE), 219 to 239 (NEVHFLFVTLCASLLFAGAVA), 258 to 278 (TPISALIHAATMVAAGIFLVA), 280 to 300 (LLPLFIVIPYIMNLISLIGII), 327 to 347 (LGYMMLALGMGSYRAALFHLI), 354 to 374 (ALLFLASGSIIHSMEAIVGYS), 396 to 416 (IAFLVGTLSLCGIPPLACFWS), 425 to 445 (WLYSPIFAIIAWSTAGLTAFY), 540 to 560 (LFPMLILLLFTLFVGAIAIPF), 600 to 620 (FSVSIACFGIFTAFLLYKPFY), and 714 to 734 (FYLLLYLVYVFIFLVISYFIL).

The protein belongs to the complex I subunit 5 family. In terms of assembly, NDH is composed of at least 16 different subunits, 5 of which are encoded in the nucleus.

It is found in the plastid. It localises to the chloroplast thylakoid membrane. It catalyses the reaction a plastoquinone + NADH + (n+1) H(+)(in) = a plastoquinol + NAD(+) + n H(+)(out). The enzyme catalyses a plastoquinone + NADPH + (n+1) H(+)(in) = a plastoquinol + NADP(+) + n H(+)(out). NDH shuttles electrons from NAD(P)H:plastoquinone, via FMN and iron-sulfur (Fe-S) centers, to quinones in the photosynthetic chain and possibly in a chloroplast respiratory chain. The immediate electron acceptor for the enzyme in this species is believed to be plastoquinone. Couples the redox reaction to proton translocation, and thus conserves the redox energy in a proton gradient. The protein is NAD(P)H-quinone oxidoreductase subunit 5, chloroplastic (ndhF) of Gossypium hirsutum (Upland cotton).